Reading from the N-terminus, the 461-residue chain is Cysteine--tRNA ligase (461 aa).

Position 28 (cysteine 28) interacts with Zn(2+). The 'HIGH' region signature appears at 30 to 40 (ITVYDLCHIGH). Residues cysteine 209, histidine 234, and glutamate 238 each contribute to the Zn(2+) site. Residues 266 to 270 (KMSKS) carry the 'KMSKS' region motif. Lysine 269 is an ATP binding site.

Belongs to the class-I aminoacyl-tRNA synthetase family. In terms of assembly, monomer. The cofactor is Zn(2+).

It is found in the cytoplasm. The enzyme catalyses tRNA(Cys) + L-cysteine + ATP = L-cysteinyl-tRNA(Cys) + AMP + diphosphate. This is Cysteine--tRNA ligase from Escherichia coli O17:K52:H18 (strain UMN026 / ExPEC).